A 76-amino-acid polypeptide reads, in one-letter code: NADH dehydrogenase [ubiquinone] 1 subunit C1, mitochondrial (76 aa).

The N-terminal 27 residues, Met1–Ser27, are a transit peptide targeting the mitochondrion. Residues Trp41–Ile59 traverse the membrane as a helical segment.

Belongs to the complex I NDUFC1 subunit family. In terms of assembly, complex I is composed of 45 different subunits.

The protein resides in the mitochondrion inner membrane. Accessory subunit of the mitochondrial membrane respiratory chain NADH dehydrogenase (Complex I), that is believed not to be involved in catalysis. Complex I functions in the transfer of electrons from NADH to the respiratory chain. The immediate electron acceptor for the enzyme is believed to be ubiquinone. This chain is NADH dehydrogenase [ubiquinone] 1 subunit C1, mitochondrial (NDUFC1), found in Homo sapiens (Human).